Consider the following 354-residue polypeptide: Ferredoxin--NADP reductase, chloroplastic (354 aa).

The N-terminal 35 residues, 1-35 (MASLRKPSNHADRACSRRLRVATRVAGRRMCRPVA), are a transit peptide targeting the chloroplast. In terms of domain architecture, FAD-binding FR-type spans 69 to 198 (KAPFKAKVRS…TGPTGKVLLL (130 aa)). Lys118 and Lys124 each carry N6,N6,N6-trimethyllysine. Residues 130 to 133 (RLYS), 151 to 153 (CVR), and Tyr157 contribute to the FAD site. NADP(+) contacts are provided by Ser133 and Arg153. At Lys170 the chain carries N6,N6-dimethyllysine. Residues 172-174 (LCS) and Thr213 each bind FAD. Residues Thr213, 245-246 (VG), 275-276 (SR), Lys285, 313-314 (GL), and Glu352 each bind NADP(+).

Belongs to the ferredoxin--NADP reductase type 1 family. It depends on FAD as a cofactor.

The protein resides in the plastid. It localises to the chloroplast stroma. The protein localises to the chloroplast thylakoid membrane. The enzyme catalyses 2 reduced [2Fe-2S]-[ferredoxin] + NADP(+) + H(+) = 2 oxidized [2Fe-2S]-[ferredoxin] + NADPH. The protein operates within energy metabolism; photosynthesis. Its function is as follows. May play a key role in regulating the relative amounts of cyclic and non-cyclic electron flow to meet the demands of the plant for ATP and reducing power. The sequence is that of Ferredoxin--NADP reductase, chloroplastic (PETH) from Chlamydomonas reinhardtii (Chlamydomonas smithii).